The primary structure comprises 275 residues: Trans-aconitate 2-methyltransferase (275 aa).

Belongs to the methyltransferase superfamily. Tam family.

The protein resides in the cytoplasm. The enzyme catalyses trans-aconitate + S-adenosyl-L-methionine = (E)-3-(methoxycarbonyl)pent-2-enedioate + S-adenosyl-L-homocysteine. Functionally, catalyzes the S-adenosylmethionine monomethyl esterification of trans-aconitate. In Pseudomonas aeruginosa (strain ATCC 15692 / DSM 22644 / CIP 104116 / JCM 14847 / LMG 12228 / 1C / PRS 101 / PAO1), this protein is Trans-aconitate 2-methyltransferase.